A 437-amino-acid chain; its full sequence is Elongation factor 1-gamma-B (437 aa).

The region spanning 2 to 87 (AGGTLYTYPD…YVANDELRGS (86 aa)) is the GST N-terminal domain. A GST C-terminal domain is found at 89–222 (NRLHQAQVIQ…KMAQFDAKKF (134 aa)). Residues 225 to 240 (VQPKKETPKKEKPAKE) are compositionally biased toward basic and acidic residues. The segment at 225–279 (VQPKKETPKKEKPAKEPKKKKKKKKKATPAPAPAPEDDLDESEKALAAEPKSKDP) is disordered. The segment covering 241–251 (PKKKKKKKKKA) has biased composition (basic residues). Over residues 266 to 279 (SEKALAAEPKSKDP) the composition is skewed to basic and acidic residues. In terms of domain architecture, EF-1-gamma C-terminal spans 276 to 437 (SKDPYAHLPK…KAFNQGKIFK (162 aa)).

EF-1 is composed of four subunits: alpha, beta, delta, and gamma.

In terms of biological role, probably plays a role in anchoring the complex to other cellular components. The protein is Elongation factor 1-gamma-B (eef1g-b) of Xenopus laevis (African clawed frog).